The sequence spans 308 residues: Ribosomal RNA large subunit methyltransferase F (308 aa).

The protein belongs to the methyltransferase superfamily. METTL16/RlmF family.

It localises to the cytoplasm. It carries out the reaction adenosine(1618) in 23S rRNA + S-adenosyl-L-methionine = N(6)-methyladenosine(1618) in 23S rRNA + S-adenosyl-L-homocysteine + H(+). Specifically methylates the adenine in position 1618 of 23S rRNA. This Escherichia coli O6:H1 (strain CFT073 / ATCC 700928 / UPEC) protein is Ribosomal RNA large subunit methyltransferase F.